Here is a 729-residue protein sequence, read N- to C-terminus: MVNKDDRIRPVHEADGEPLFETRRRTGRVIAYRFFSASVFVCICLIWFYRIGEIGDNRTVLDRLIWFVMFIVEIWFGLYWVVTQSSRWNPVWRFPFSDRLSRRYGSDLPRLDVFVCTADPVIEPPLLVVNTVLSVTALDYPPEKLAVYLSDDGGSELTFYALTEAAEFAKTWVPFCKKFNVEPTSPAAYLSSKANCLDSAAEEVAKLYREMAARIETAARLGRIPEEARVKYGDGFSQWDADATRRNHGTILQVLVDGREGNTIAIPTLVYLSREKRPQHHHNFKAGAMNALLRVSSKITCGKIILNLDCDMYANNSKSTRDALCILLDEKEGKEIAFVQFPQCFDNVTRNDLYGSMMRVGIDVEFLGLDGNGGPLYIGTGCFHRRDVICGRKYGEEEEEEESERIHENLEPEMIKALASCTYEENTQWGKEMGVKYGCPVEDVITGLTIQCRGWKSAYLNPEKQAFLGVAPTNLHQMLVQQRRWSEGDFQIMLSKYSPVWYGKGKISLGLILGYCCYCLWAPSSLPVLIYSVLTSLCLFKGIPLFPKVSSSWFIPFGYVTVAATAYSLAEFLWCGGTFRGWWNEQRMWLYRRTSSFLFGFMDTIKKLLGVSESAFVITAKVAEEEAAERYKEEVMEFGVESPMFLVLGTLGMLNLFCFAAAVARLVSGDGGDLKTMGMQFVITGVLVVINWPLYKGMLLRQDKGKMPMSVTVKSVVLALSACTCLAFL.

Transmembrane regions (helical) follow at residues 29 to 49 (VIAY…IWFY) and 64 to 84 (LIWF…VVTQ). Residues Asp152 and Asp443 contribute to the active site. The next 5 membrane-spanning stretches (helical) occupy residues 526–546 (LPVL…IPLF), 553–573 (WFIP…AEFL), 644–664 (MFLV…AAVA), 680–700 (QFVI…GMLL), and 709–729 (MSVT…LAFL).

The protein belongs to the glycosyltransferase 2 family. Plant cellulose synthase-like E subfamily.

It is found in the golgi apparatus membrane. Its function is as follows. Thought to be a Golgi-localized beta-glycan synthase that polymerize the backbones of noncellulosic polysaccharides (hemicelluloses) of plant cell wall. The protein is Cellulose synthase-like protein E1 (CSLE1) of Arabidopsis thaliana (Mouse-ear cress).